The sequence spans 223 residues: Putative 3-methyladenine DNA glycosylase (223 aa).

This sequence belongs to the DNA glycosylase MPG family.

The polypeptide is Putative 3-methyladenine DNA glycosylase (Pseudomonas syringae pv. tomato (strain ATCC BAA-871 / DC3000)).